Reading from the N-terminus, the 96-residue chain is Large ribosomal subunit protein bL28 (96 aa).

This sequence belongs to the bacterial ribosomal protein bL28 family.

This chain is Large ribosomal subunit protein bL28, found in Agrobacterium fabrum (strain C58 / ATCC 33970) (Agrobacterium tumefaciens (strain C58)).